The sequence spans 21 residues: Cupiennin-6e (21 aa).

The residue at position 21 (S21) is a Serine amide.

Expressed by the venom gland.

It localises to the secreted. The protein is Cupiennin-6e of Cupiennius salei (American wandering spider).